The sequence spans 1806 residues: Non-reducing polyketide synthase pks12 (1806 aa).

Residues 30–191 (TDTMSGMISL…TKLHLRGKVH (162 aa)) form the Starter acyltransferase (SAT) domain. The region spanning 330 to 755 (ENAIAIVGAG…GSNSALICGE (426 aa)) is the Ketosynthase family 3 (KS3) domain. Catalysis depends on for beta-ketoacyl synthase activity residues C504, H639, and H678. Positions 860–1156 (LAFSGQSKQT…HNPSQHTFLG (297 aa)) are malonyl-CoA:ACP transacylase (MAT) domain. One can recognise a Malonyl-CoA:ACP transacylase (MAT) domain in the interval 862-1147 (FSGQSKQTIG…IIPMVKRATH (286 aa)). The For acyl/malonyl transferase activity role is filled by S947. The interval 1249 to 1383 (PQTPPLKLVT…GRFSVTSHID (135 aa)) is N-terminal hotdog fold. Residues 1249–1558 (PQTPPLKLVT…FSRFPIAKLE (310 aa)) enclose the PKS/mFAS DH domain. Residues 1249-1558 (PQTPPLKLVT…FSRFPIAKLE (310 aa)) form a product template (PT) domain region. H1288 (proton acceptor; for dehydratase activity) is an active-site residue. A C-terminal hotdog fold region spans residues 1404-1558 (SERLMAGRAY…FSRFPIAKLE (155 aa)). The Proton donor; for dehydratase activity role is filled by D1468. The Carrier domain maps to 1727–1804 (QSKLRIRQRI…ELVDYVVISS (78 aa)). The residue at position 1764 (S1764) is an O-(pantetheine 4'-phosphoryl)serine.

Requires pantetheine 4'-phosphate as cofactor.

The protein operates within secondary metabolite biosynthesis. In terms of biological role, non-reducing polyketide synthase; part of the gene cluster that mediates the biosynthesis of mitorubrinol and mitorubrinic acid, two virulence factors that improve T.marneffei intracellular survival in macrophages. The two polyketide synthases pks12 and pks11 are probably responsible for sequential use in the biosynthesis of mitorubrinol and mitorubrinic acid. The first part of the biosynthesis is probably catalyzed by pks12, which synthesized orsellinic acid. This tetraketide is then used as a starter unit for pks11, which possesses a SAT domain, in the second part of the biosynthesis. Pks11, contains a methyltransferase domain, also served that methylates the products, using a methyl group from S-adenosylmethionine. The sequence is that of Non-reducing polyketide synthase pks12 from Talaromyces marneffei (Penicillium marneffei).